The primary structure comprises 258 residues: MEIVIRKTPEQVSLQAADILEPYVSEGATLGLATGSTPLGTYQELIRRHNESGLSFANNQAFLLDEYVGLPRDHEQSYYRTIRREFTEHIDIKDEAVSSPDGLADNIDEAGRAYDERIRNAGGVDIQILGIGTDGHIGFNEPGSSLNSPTRLKTLHPQTVSDNARFFDSEDDVPRHVLTQGLGTIQHARHLLLLATGKNKAAAVQALAEGPVSASCPASVLQLHPHATVIIDEAAATCLEHKEYYIFAEKNKPEWQRY.

Asp-65 (proton acceptor; for enolization step) is an active-site residue. Asp-134 serves as the catalytic For ring-opening step. Catalysis depends on His-136, which acts as the Proton acceptor; for ring-opening step. Glu-141 acts as the For ring-opening step in catalysis.

This sequence belongs to the glucosamine/galactosamine-6-phosphate isomerase family. NagB subfamily.

It catalyses the reaction alpha-D-glucosamine 6-phosphate + H2O = beta-D-fructose 6-phosphate + NH4(+). The protein operates within amino-sugar metabolism; N-acetylneuraminate degradation; D-fructose 6-phosphate from N-acetylneuraminate: step 5/5. Its function is as follows. Catalyzes the reversible isomerization-deamination of glucosamine 6-phosphate (GlcN6P) to form fructose 6-phosphate (Fru6P) and ammonium ion. This chain is Glucosamine-6-phosphate deaminase, found in Corynebacterium kroppenstedtii (strain DSM 44385 / JCM 11950 / CIP 105744 / CCUG 35717).